A 136-amino-acid chain; its full sequence is Putative pre-16S rRNA nuclease (136 aa).

Belongs to the YqgF nuclease family.

It localises to the cytoplasm. Functionally, could be a nuclease involved in processing of the 5'-end of pre-16S rRNA. The sequence is that of Putative pre-16S rRNA nuclease from Francisella tularensis subsp. holarctica (strain FTNF002-00 / FTA).